A 1005-amino-acid polypeptide reads, in one-letter code: Ephrin type-A receptor 5 (1005 aa).

The interval 1 to 24 (MRGSGPRGAGRRRTQGRGGGGDTP) is disordered. A signal peptide spans 1 to 26 (MRGSGPRGAGRRRTQGRGGGGDTPRV). At 27-575 (PASLAGCYSA…GASNDQSQIP (549 aa)) the chain is on the extracellular side. The Eph LBD domain maps to 62–240 (EVNLLDSRTV…YYKKCPSVVR (179 aa)). N-linked (GlcNAc...) asparagine glycosylation is found at asparagine 266, asparagine 301, asparagine 371, asparagine 425, asparagine 438, and asparagine 463. 2 Fibronectin type-III domains span residues 359–469 (PPSA…TNQA) and 470–564 (APSP…TTPV). Residues 576–596 (IIGVSVTVGVILLAVMIGFLL) form a helical membrane-spanning segment. At 597 to 1005 (SGSCCECGCG…MDAVAQVTLE (409 aa)) the chain is on the cytoplasmic side. A phosphotyrosine; by autocatalysis mark is found at tyrosine 652 and tyrosine 658. The Protein kinase domain occupies 677-938 (ITIERVIGAG…DIVNMLDKLI (262 aa)). Residues 683-691 (IGAGEFGEV) and lysine 709 each bind ATP. The active-site Proton acceptor is aspartate 802. Phosphotyrosine; by autocatalysis is present on residues tyrosine 835 and tyrosine 984. In terms of domain architecture, SAM spans 967–1005 (GAYRSVGEWLEATKMGRYTEIFMENGYSSMDAVAQVTLE).

This sequence belongs to the protein kinase superfamily. Tyr protein kinase family. Ephrin receptor subfamily. In terms of assembly, heterotetramer upon binding of the ligand. The heterotetramer is composed of an ephrin dimer and a receptor dimer. Oligomerization is probably required to induce biological responses. Interacts (via SAM domain) with SAMD5 (via SAM domain). Post-translationally, phosphorylated. Phosphorylation is stimulated by the ligand EFNA5. Dephosphorylation upon stimulation by glucose, inhibits EPHA5 forward signaling and results in insulin secretion. As to expression, almost exclusively expressed in the nervous system. Predominantly expressed in neurons.

The protein localises to the cell membrane. It is found in the cell projection. The protein resides in the axon. It localises to the dendrite. The enzyme catalyses L-tyrosyl-[protein] + ATP = O-phospho-L-tyrosyl-[protein] + ADP + H(+). Functionally, receptor tyrosine kinase which binds promiscuously GPI-anchored ephrin-A family ligands residing on adjacent cells, leading to contact-dependent bidirectional signaling into neighboring cells. The signaling pathway downstream of the receptor is referred to as forward signaling while the signaling pathway downstream of the ephrin ligand is referred to as reverse signaling. Among GPI-anchored ephrin-A ligands, EFNA5 most probably constitutes the cognate/functional ligand for EPHA5. Functions as an axon guidance molecule during development and may be involved in the development of the retinotectal, entorhino-hippocampal and hippocamposeptal pathways. Together with EFNA5 plays also a role in synaptic plasticity in adult brain through regulation of synaptogenesis. In addition to its function in the nervous system, the interaction of EPHA5 with EFNA5 mediates communication between pancreatic islet cells to regulate glucose-stimulated insulin secretion. This is Ephrin type-A receptor 5 (Epha5) from Rattus norvegicus (Rat).